The sequence spans 607 residues: Acyl-coenzyme A thioesterase 11 (607 aa).

The transit peptide at 1 to 13 (MIQNVGNHLRRGL) directs the protein to the mitochondrion. A phosphoserine mark is found at S15 and S25. Residues 43-155 (NPTEVQMSQL…LATFVARREI (113 aa)) enclose the HotDog ACOT-type 1 domain. CoA is bound by residues 91–93 (TAS), 120–122 (NSS), R181, and 271–273 (HFR). The HotDog ACOT-type 2 domain maps to 216–329 (EKTRVESVEL…FMTFVVLDAD (114 aa)). Residues 375–585 (LSVPWDPSNQ…GWNGKLAGGH (211 aa)) form the START domain.

Isoform 1 is predominantly expressed in skeletal muscle, liver, testis, stomach, spleen, lung and brain. Isoform 2 is predominantly expressed in kidney, uterus, hibernoma and white adipose tissue.

It is found in the mitochondrion matrix. The protein resides in the cytoplasm. The enzyme catalyses hexadecanoyl-CoA + H2O = hexadecanoate + CoA + H(+). It carries out the reaction tetradecanoyl-CoA + H2O = tetradecanoate + CoA + H(+). It catalyses the reaction dodecanoyl-CoA + H2O = dodecanoate + CoA + H(+). The catalysed reaction is butanoyl-CoA + H2O = butanoate + CoA + H(+). The protein operates within lipid metabolism; fatty acid metabolism. Has an acyl-CoA thioesterase activity with a preference for the long chain fatty acyl-CoA thioesters hexadecanoyl-CoA/palmitoyl-CoA and tetradecanoyl-CoA/myristoyl-CoA which are the main substrates in the mitochondrial beta-oxidation pathway. The protein is Acyl-coenzyme A thioesterase 11 (ACOT11) of Homo sapiens (Human).